We begin with the raw amino-acid sequence, 338 residues long: CRISPR-associated endonuclease Cas1 (338 aa).

Glu-165, His-230, and Glu-245 together coordinate Mn(2+).

Belongs to the CRISPR-associated endonuclease Cas1 family. Homodimer, forms a heterotetramer with a Cas2 homodimer. Requires Mg(2+) as cofactor. It depends on Mn(2+) as a cofactor.

Functionally, CRISPR (clustered regularly interspaced short palindromic repeat), is an adaptive immune system that provides protection against mobile genetic elements (viruses, transposable elements and conjugative plasmids). CRISPR clusters contain spacers, sequences complementary to antecedent mobile elements, and target invading nucleic acids. CRISPR clusters are transcribed and processed into CRISPR RNA (crRNA). Acts as a dsDNA endonuclease. Involved in the integration of spacer DNA into the CRISPR cassette. The sequence is that of CRISPR-associated endonuclease Cas1 from Fusobacterium nucleatum subsp. nucleatum (strain ATCC 25586 / DSM 15643 / BCRC 10681 / CIP 101130 / JCM 8532 / KCTC 2640 / LMG 13131 / VPI 4355).